Consider the following 751-residue polypeptide: WD repeat-containing protein 91 (751 aa).

Residues glutamine 183 to glutamate 205 are a coiled coil. The segment at glutamate 237–glutamine 398 is disordered. The span at leucine 238–alanine 267 shows a compositional bias: polar residues. Residues threonine 356–threonine 373 show a composition bias toward basic and acidic residues. WD repeat units follow at residues glutamate 410–alanine 449, isoleucine 452–glutamate 492, serine 517–glutamine 559, proline 564–serine 603, alanine 606–serine 645, valine 668–glutamate 706, and glycine 713–serine 751.

It belongs to the WD repeat WDR91 family.

It localises to the early endosome membrane. The protein localises to the late endosome membrane. Functions as a negative regulator of the PI3 kinase/PI3K activity associated with endosomal membranes. By modifying the phosphatidylinositol 3-phosphate/PtdInsP3 content of endosomal membranes may regulate endosome fusion, recycling, sorting and early to late endosome transport. In Xenopus tropicalis (Western clawed frog), this protein is WD repeat-containing protein 91.